Consider the following 309-residue polypeptide: Ribonuclease Z (309 aa).

H63, H65, D67, H68, H145, D216, and H274 together coordinate Zn(2+). D67 serves as the catalytic Proton acceptor.

The protein belongs to the RNase Z family. In terms of assembly, homodimer. Requires Zn(2+) as cofactor.

It carries out the reaction Endonucleolytic cleavage of RNA, removing extra 3' nucleotides from tRNA precursor, generating 3' termini of tRNAs. A 3'-hydroxy group is left at the tRNA terminus and a 5'-phosphoryl group is left at the trailer molecule.. Zinc phosphodiesterase, which displays some tRNA 3'-processing endonuclease activity. Probably involved in tRNA maturation, by removing a 3'-trailer from precursor tRNA. This chain is Ribonuclease Z, found in Streptococcus pneumoniae (strain 70585).